Consider the following 132-residue polypeptide: Large ribosomal subunit protein bL19 (132 aa).

The protein belongs to the bacterial ribosomal protein bL19 family.

In terms of biological role, this protein is located at the 30S-50S ribosomal subunit interface and may play a role in the structure and function of the aminoacyl-tRNA binding site. The chain is Large ribosomal subunit protein bL19 from Maricaulis maris (strain MCS10) (Caulobacter maris).